Here is a 366-residue protein sequence, read N- to C-terminus: UDP-N-acetylenolpyruvoylglucosamine reductase (366 aa).

The FAD-binding PCMH-type domain maps to 29 to 203 (VGPVARTLVT…LEVEFALDAS (175 aa)). Residue R177 is part of the active site. The active-site Proton donor is S258. Residue E358 is part of the active site.

The protein belongs to the MurB family. Requires FAD as cofactor.

Its subcellular location is the cytoplasm. It carries out the reaction UDP-N-acetyl-alpha-D-muramate + NADP(+) = UDP-N-acetyl-3-O-(1-carboxyvinyl)-alpha-D-glucosamine + NADPH + H(+). It functions in the pathway cell wall biogenesis; peptidoglycan biosynthesis. In terms of biological role, cell wall formation. The polypeptide is UDP-N-acetylenolpyruvoylglucosamine reductase (Mycobacterium ulcerans (strain Agy99)).